Consider the following 255-residue polypeptide: Putative esterase YitV (255 aa).

This Bacillus subtilis (strain 168) protein is Putative esterase YitV (yitV).